The following is a 679-amino-acid chain: Biosynthetic arginine decarboxylase (679 aa).

The disordered stretch occupies residues 1-43 (MKHRGQEEMGVESTATSDEVVKVPANGNKLEGKNHKQKKLLPT). Lys149 carries the post-translational modification N6-(pyridoxal phosphate)lysine. Position 331-341 (331-341 (LDVGGGLGVDY)) interacts with substrate.

Belongs to the Orn/Lys/Arg decarboxylase class-II family. SpeA subfamily. The cofactor is Mg(2+). Pyridoxal 5'-phosphate is required as a cofactor.

It carries out the reaction L-arginine + H(+) = agmatine + CO2. Catalyzes the biosynthesis of agmatine from arginine. In Nostoc sp. (strain PCC 7120 / SAG 25.82 / UTEX 2576), this protein is Biosynthetic arginine decarboxylase.